The chain runs to 204 residues: Guanylate kinase (204 aa).

The region spanning 18–196 (PKLFTISAPA…SYEILKSIFI (179 aa)) is the Guanylate kinase-like domain. 25–32 (APAGAGKT) contributes to the ATP binding site.

The protein belongs to the guanylate kinase family.

The protein resides in the cytoplasm. The catalysed reaction is GMP + ATP = GDP + ADP. Essential for recycling GMP and indirectly, cGMP. The sequence is that of Guanylate kinase from Chlamydia caviae (strain ATCC VR-813 / DSM 19441 / 03DC25 / GPIC) (Chlamydophila caviae).